The chain runs to 101 residues: Small ribosomal subunit protein uS14 (101 aa).

It belongs to the universal ribosomal protein uS14 family. Part of the 30S ribosomal subunit. Contacts proteins S3 and S10.

Functionally, binds 16S rRNA, required for the assembly of 30S particles and may also be responsible for determining the conformation of the 16S rRNA at the A site. The protein is Small ribosomal subunit protein uS14 of Escherichia coli O8 (strain IAI1).